The sequence spans 309 residues: Putative rhizopine-binding protein (309 aa).

Residues 1–20 (MKKFIIGIAAAVLVSTAAHA) form the signal peptide.

Belongs to the bacterial solute-binding protein 2 family.

Its subcellular location is the periplasm. Involved in rhizopine (L-3-O-methyl-scyllo-inosamine) catabolism. Could be involved in its high affinity transport. The sequence is that of Putative rhizopine-binding protein (mocB) from Rhizobium meliloti (Ensifer meliloti).